The chain runs to 470 residues: tRNA(Ile)-lysidine synthase (470 aa).

ATP is bound at residue serine 32–serine 37.

The protein belongs to the tRNA(Ile)-lysidine synthase family.

It is found in the cytoplasm. The catalysed reaction is cytidine(34) in tRNA(Ile2) + L-lysine + ATP = lysidine(34) in tRNA(Ile2) + AMP + diphosphate + H(+). In terms of biological role, ligates lysine onto the cytidine present at position 34 of the AUA codon-specific tRNA(Ile) that contains the anticodon CAU, in an ATP-dependent manner. Cytidine is converted to lysidine, thus changing the amino acid specificity of the tRNA from methionine to isoleucine. The sequence is that of tRNA(Ile)-lysidine synthase from Shewanella woodyi (strain ATCC 51908 / MS32).